The primary structure comprises 259 residues: Dihydroorotate dehydrogenase B (NAD(+)), electron transfer subunit (259 aa).

The FAD-binding FR-type domain occupies 3-103; sequence KKQGRLTIVK…LGPLGQGFPL (101 aa). FAD-binding positions include 54-57, 71-73, and 78-79; these read RPIS, IYR, and GT. [2Fe-2S] cluster-binding residues include Cys222, Cys227, Cys230, and Cys246.

It belongs to the PyrK family. In terms of assembly, heterotetramer of 2 PyrK and 2 PyrD type B subunits. [2Fe-2S] cluster serves as cofactor. The cofactor is FAD.

It functions in the pathway pyrimidine metabolism; UMP biosynthesis via de novo pathway; orotate from (S)-dihydroorotate (NAD(+) route): step 1/1. In terms of biological role, responsible for channeling the electrons from the oxidation of dihydroorotate from the FMN redox center in the PyrD type B subunit to the ultimate electron acceptor NAD(+). The chain is Dihydroorotate dehydrogenase B (NAD(+)), electron transfer subunit from Shouchella clausii (strain KSM-K16) (Alkalihalobacillus clausii).